We begin with the raw amino-acid sequence, 229 residues long: Ribosome maturation factor RimM (229 aa).

The segment at 1 to 21 is disordered; sequence MAGHDSGNAKRGRSPSFGVFV. The region spanning 148 to 229 is the PRC barrel domain; sequence ADEFYWVDLI…RVVVDWEADY (82 aa).

Belongs to the RimM family. As to quaternary structure, binds ribosomal protein uS19.

It is found in the cytoplasm. An accessory protein needed during the final step in the assembly of 30S ribosomal subunit, possibly for assembly of the head region. Essential for efficient processing of 16S rRNA. May be needed both before and after RbfA during the maturation of 16S rRNA. It has affinity for free ribosomal 30S subunits but not for 70S ribosomes. This chain is Ribosome maturation factor RimM, found in Burkholderia mallei (strain NCTC 10247).